A 261-amino-acid polypeptide reads, in one-letter code: DNA repair protein RecO (261 aa).

This sequence belongs to the RecO family.

Involved in DNA repair and RecF pathway recombination. The chain is DNA repair protein RecO from Mycobacteroides abscessus (strain ATCC 19977 / DSM 44196 / CCUG 20993 / CIP 104536 / JCM 13569 / NCTC 13031 / TMC 1543 / L948) (Mycobacterium abscessus).